The chain runs to 367 residues: 2-aminoethylphosphonate--pyruvate transaminase (367 aa).

An N6-(pyridoxal phosphate)lysine modification is found at Lys-194.

The protein belongs to the class-V pyridoxal-phosphate-dependent aminotransferase family. PhnW subfamily. Homodimer. The cofactor is pyridoxal 5'-phosphate.

It carries out the reaction (2-aminoethyl)phosphonate + pyruvate = phosphonoacetaldehyde + L-alanine. In terms of biological role, involved in phosphonate degradation. In Salmonella paratyphi A (strain ATCC 9150 / SARB42), this protein is 2-aminoethylphosphonate--pyruvate transaminase.